Reading from the N-terminus, the 332-residue chain is Putative ankyrin repeat protein R896 (332 aa).

5 ANK repeats span residues 159-188 (GNDNAMIIAAQKGNLEIVKFLVESGANVKS), 190-218 (DNCAVRLASEFGHLDVVEYLYKSGANVKA), 219-248 (DGNYAITWACKNGHLPVIEFLTSVGADIKA), 249-278 (AQNLPIKMAAIGGHLNVIKYLVDRGANIST), and 280-308 (NDYVFNIACRNGHTDLAEYAVSLGADIFS).

The polypeptide is Putative ankyrin repeat protein R896 (Acanthamoeba polyphaga mimivirus (APMV)).